Here is a 412-residue protein sequence, read N- to C-terminus: Serine hydroxymethyltransferase (412 aa).

Residues L117 and 121-123 (GHL) contribute to the (6S)-5,6,7,8-tetrahydrofolate site. An N6-(pyridoxal phosphate)lysine modification is found at K226. 349-351 (SPF) serves as a coordination point for (6S)-5,6,7,8-tetrahydrofolate.

Belongs to the SHMT family. As to quaternary structure, homodimer. It depends on pyridoxal 5'-phosphate as a cofactor.

Its subcellular location is the cytoplasm. The enzyme catalyses (6R)-5,10-methylene-5,6,7,8-tetrahydrofolate + glycine + H2O = (6S)-5,6,7,8-tetrahydrofolate + L-serine. It participates in one-carbon metabolism; tetrahydrofolate interconversion. It functions in the pathway amino-acid biosynthesis; glycine biosynthesis; glycine from L-serine: step 1/1. Its function is as follows. Catalyzes the reversible interconversion of serine and glycine with tetrahydrofolate (THF) serving as the one-carbon carrier. This reaction serves as the major source of one-carbon groups required for the biosynthesis of purines, thymidylate, methionine, and other important biomolecules. Also exhibits THF-independent aldolase activity toward beta-hydroxyamino acids, producing glycine and aldehydes, via a retro-aldol mechanism. This is Serine hydroxymethyltransferase from Oleidesulfovibrio alaskensis (strain ATCC BAA-1058 / DSM 17464 / G20) (Desulfovibrio alaskensis).